The following is a 126-amino-acid chain: Glycine cleavage system H protein (126 aa).

Positions 23 to 104 (KVRVGITDFA…YDEGWMIEII (82 aa)) constitute a Lipoyl-binding domain. At Lys-64 the chain carries N6-lipoyllysine.

The protein belongs to the GcvH family. The glycine cleavage system is composed of four proteins: P, T, L and H. (R)-lipoate serves as cofactor.

In terms of biological role, the glycine cleavage system catalyzes the degradation of glycine. The H protein shuttles the methylamine group of glycine from the P protein to the T protein. This chain is Glycine cleavage system H protein, found in Chlorobium phaeobacteroides (strain BS1).